A 602-amino-acid polypeptide reads, in one-letter code: Zinc finger MYND domain-containing protein 11 (602 aa).

Positions 6 to 82 constitute an SAMD1-like winged helix (WH) domain; the sequence is KRRQADTKAI…CKGSKAGIEQ (77 aa). Residues 100–148 form a PHD-type zinc finger; it reads DWYCFECHLPGEVLICDLCFRVYHSKCLSDEFRLRDSSSHWQCPVCRSI. The region spanning 149–255 is the Bromo domain; it reads KKKHSNKQEM…KDTCHELDEL (107 aa). Zn(2+) is bound by residues Cys-258, Cys-261, Cys-277, and His-281. The PWWP domain occupies 280–331; that stretch reads NHELVWAKMKGFGFWPAKVMQKEDNQVDVRFFGHHHQRAWIPSENIQDITVN. The tract at residues 291 to 310 is aromatic cage required for H3.3K36me3-specific binding; sequence FGFWPAKVMQKEDNQVDVRF. Lys-366 participates in a covalent cross-link: Glycyl lysine isopeptide (Lys-Gly) (interchain with G-Cter in SUMO2). Positions 366-461 are disordered; it reads KNEDRGEEEA…HRSTQTTSDG (96 aa). A Nuclear localization signal motif is present at residues 394 to 400; it reads RAKKGRR. Glycyl lysine isopeptide (Lys-Gly) (interchain with G-Cter in SUMO2) cross-links involve residues Lys-407 and Lys-408. A Phosphoserine modification is found at Ser-421. Residues 435-461 are compositionally biased toward polar residues; sequence SVSTQTKKLSASSPRMLHRSTQTTSDG. 8 residues coordinate Zn(2+): Cys-563, Cys-566, Cys-574, Cys-575, Cys-581, Cys-585, His-594, and Cys-598. An MYND-type zinc finger spans residues 563 to 598; the sequence is CYNCEEEAMYHCCWNTSYCSIKCQQEHWHAEHKRTC.

Homooligomer; forms homooligomers via its C-terminus. Interacts with histone H3.3 trimethylated at 'Lys-36' (H3.3K36me3). Interacts (via MYND-type zinc finger) with NCOR1. Interacts (via MYND-type zinc finger) with MGA protein (via PXLXP motif). Interacts (via MYND-type zinc finger) with EZH2. Interacts with EMSY and E2F6. Interacts with PIAS1 and UBE2I. Ubiquitinated, leading to proteasomal degradation. In terms of processing, sumoylated following its interaction with PIAS1 and UBE2I.

Its subcellular location is the nucleus. It localises to the chromosome. Chromatin reader that specifically recognizes and binds histone H3.3 trimethylated at 'Lys-36' (H3.3K36me3) and regulates RNA polymerase II elongation. Does not bind other histone H3 subtypes (H3.1 or H3.2). Colocalizes with highly expressed genes and functions as a transcription corepressor by modulating RNA polymerase II at the elongation stage. Binds non-specifically to dsDNA. Acts as a tumor-suppressor by repressing a transcriptional program essential for tumor cell growth. This is Zinc finger MYND domain-containing protein 11 (Zmynd11) from Mus musculus (Mouse).